The following is a 260-amino-acid chain: Small ribosomal subunit protein eS1 (260 aa).

Residues 1-18 (MAVGKNKRISKGKKGGKK) are compositionally biased toward basic residues. The interval 1–22 (MAVGKNKRISKGKKGGKKKAAD) is disordered.

It belongs to the eukaryotic ribosomal protein eS1 family. As to quaternary structure, component of the small ribosomal subunit. Mature ribosomes consist of a small (40S) and a large (60S) subunit. The 40S subunit contains about 33 different proteins and 1 molecule of RNA (18S). The 60S subunit contains about 49 different proteins and 3 molecules of RNA (25S, 5.8S and 5S).

It localises to the cytoplasm. The sequence is that of Small ribosomal subunit protein eS1 from Helianthus annuus (Common sunflower).